A 515-amino-acid polypeptide reads, in one-letter code: MKEAGQMQNLESARAGRSVSTQTGSMTGQIPRLSKVNLFTLLSLWMELFPAVEAQRQKSQKNEEGKHGPLGDNEEMTRVSTDKRQVKRTGLVVVKNMKIVGLHCSSEDLHAGQIALIKHGSRLKNCDLYFSRKPCSACLKMIVNAGVNRISYWPADPEISLLTEASSSEDAKLDAKAVERLKSNSRAHVCVLLQPLVCYMVQFVEETSYKCDFIQKITKTLPDANTDFYYECKQERIKEYEMLFLVSNEEMHKQILMTIGLENLCENPYFSNLRQNMKDLILLLATVASSVPNFKHFGFYCSNPEQINEIHNQSLPQEIARHCMVQARLLAYRTEDHKTGVGAVIWAEGKSRSCDGTGAMYFVGCGYNAFPVGSEYADFPHMDDKQKDREIRKFRYIIHAEQNALTFRCQEIKPEERSMIFVTKCPCDECVPLIKGAGIKQIYAGDVDVGKKKADISYMRFGELEGVSKFTWQLNPSEAYGLEQNEPERRENGVLRPVPQKEEQHQDKKLRLGIH.

Composition is skewed to polar residues over residues 1–11 (MKEAGQMQNLE) and 18–27 (SVSTQTGSMT). Disordered regions lie at residues 1–27 (MKEAGQMQNLESARAGRSVSTQTGSMT) and 56–83 (RQKSQKNEEGKHGPLGDNEEMTRVSTDK). Basic and acidic residues predominate over residues 60-83 (QKNEEGKHGPLGDNEEMTRVSTDK). The region spanning 71 to 169 (GDNEEMTRVS…SLLTEASSSE (99 aa)) is the CMP/dCMP-type deaminase 1 domain. His110, Cys135, and Cys138 together coordinate Zn(2+). Residues 272–284 (NLRQNMKDLILLL) carry the Nuclear export signal motif. In terms of domain architecture, CMP/dCMP-type deaminase 2 spans 318–483 (EIARHCMVQA…LNPSEAYGLE (166 aa)). His399 is a Zn(2+) binding site. Glu401 functions as the Proton donor in the catalytic mechanism. Residues Cys427 and Cys430 each coordinate Zn(2+). Positions 481-515 (GLEQNEPERRENGVLRPVPQKEEQHQDKKLRLGIH) are disordered. The span at 486–515 (EPERRENGVLRPVPQKEEQHQDKKLRLGIH) shows a compositional bias: basic and acidic residues. A Bipartite nuclear localization signal motif is present at residues 489–511 (RRENGVLRPVPQKEEQHQDKKLR).

The protein belongs to the cytidine and deoxycytidylate deaminase family. Zn(2+) is required as a cofactor.

Its subcellular location is the cytoplasm. It is found in the nucleus. It catalyses the reaction 2'-deoxycytidine + H2O + H(+) = 2'-deoxyuridine + NH4(+). The catalysed reaction is cytidine + H2O + H(+) = uridine + NH4(+). Functionally, catalyzes the deamination of cytidine and deoxycytidine into uridine and deoxyuridine, respectively. May play an important role in testicular development and spermatogenesis. This is Cytidine and dCMP deaminase domain-containing protein 1 (CDADC1) from Macaca fascicularis (Crab-eating macaque).